Here is a 156-residue protein sequence, read N- to C-terminus: ATP synthase subunit b (156 aa).

A helical membrane pass occupies residues 11–31 (AIAFVLFVLFCMKYVWPPLMA).

This sequence belongs to the ATPase B chain family. As to quaternary structure, F-type ATPases have 2 components, F(1) - the catalytic core - and F(0) - the membrane proton channel. F(1) has five subunits: alpha(3), beta(3), gamma(1), delta(1), epsilon(1). F(0) has three main subunits: a(1), b(2) and c(10-14). The alpha and beta chains form an alternating ring which encloses part of the gamma chain. F(1) is attached to F(0) by a central stalk formed by the gamma and epsilon chains, while a peripheral stalk is formed by the delta and b chains.

The protein resides in the cell inner membrane. F(1)F(0) ATP synthase produces ATP from ADP in the presence of a proton or sodium gradient. F-type ATPases consist of two structural domains, F(1) containing the extramembraneous catalytic core and F(0) containing the membrane proton channel, linked together by a central stalk and a peripheral stalk. During catalysis, ATP synthesis in the catalytic domain of F(1) is coupled via a rotary mechanism of the central stalk subunits to proton translocation. Functionally, component of the F(0) channel, it forms part of the peripheral stalk, linking F(1) to F(0). This is ATP synthase subunit b from Citrobacter koseri (strain ATCC BAA-895 / CDC 4225-83 / SGSC4696).